The sequence spans 225 residues: MNLIEFPLLDQTSSNSVISTTLNDLSNWSRLSSLWPLLYGTSCCFIEFASLIGSRFDFDRYGLVPRSSPRQADLILTAGTVTMKMAPSLVRLYEQMPEPKYVIAMGACTITGGMFSTDSYSTVRGVDKLIPVDVYLPGCPPKPEAVIDALTKLRKKISREIVEDRTLSQNKKRCFTTSHKLYVRRSTHTGTYEQELLYQSPSTLDISSETFLKSKSPVPSYKLVN.

[4Fe-4S] cluster is bound by residues cysteine 43, cysteine 44, cysteine 108, and cysteine 139.

Belongs to the complex I 20 kDa subunit family. In terms of assembly, NDH is composed of at least 16 different subunits, 5 of which are encoded in the nucleus. It depends on [4Fe-4S] cluster as a cofactor.

The protein localises to the plastid. The protein resides in the chloroplast thylakoid membrane. It catalyses the reaction a plastoquinone + NADH + (n+1) H(+)(in) = a plastoquinol + NAD(+) + n H(+)(out). It carries out the reaction a plastoquinone + NADPH + (n+1) H(+)(in) = a plastoquinol + NADP(+) + n H(+)(out). NDH shuttles electrons from NAD(P)H:plastoquinone, via FMN and iron-sulfur (Fe-S) centers, to quinones in the photosynthetic chain and possibly in a chloroplast respiratory chain. The immediate electron acceptor for the enzyme in this species is believed to be plastoquinone. Couples the redox reaction to proton translocation, and thus conserves the redox energy in a proton gradient. The polypeptide is NAD(P)H-quinone oxidoreductase subunit K, chloroplastic (Hordeum vulgare (Barley)).